Consider the following 58-residue polypeptide: Large ribosomal subunit protein uL30 (58 aa).

The protein belongs to the universal ribosomal protein uL30 family. Part of the 50S ribosomal subunit.

The chain is Large ribosomal subunit protein uL30 from Vibrio campbellii (strain ATCC BAA-1116).